A 197-amino-acid polypeptide reads, in one-letter code: Ion-translocating oxidoreductase complex subunit B (197 aa).

Residues 1 to 26 (MSTILIAIIALAVLAAVFGAILGFAS) form a hydrophobic region. A 4Fe-4S domain is found at 32 to 90 (EADPIVDQIDTILPQTQCGQCGYPGCRPYAEAIANGDKINKCPPGGQATIEKLADLMGV). Residues cysteine 49, cysteine 52, cysteine 57, cysteine 73, cysteine 114, cysteine 117, cysteine 120, cysteine 124, cysteine 144, cysteine 147, cysteine 150, and cysteine 154 each coordinate [4Fe-4S] cluster. 4Fe-4S ferredoxin-type domains follow at residues 105–134 (TVAFIHEDMCIGCTKCIQACPVDAIVGGTK) and 135–164 (ALHTVIKDECTGCDLCVAPCPTDCIEMIPV).

It belongs to the 4Fe4S bacterial-type ferredoxin family. RnfB subfamily. In terms of assembly, the complex is composed of six subunits: RnfA, RnfB, RnfC, RnfD, RnfE and RnfG. Requires [4Fe-4S] cluster as cofactor.

The protein localises to the cell inner membrane. Its function is as follows. Part of a membrane-bound complex that couples electron transfer with translocation of ions across the membrane. This Vibrio atlanticus (strain LGP32) (Vibrio splendidus (strain Mel32)) protein is Ion-translocating oxidoreductase complex subunit B.